Reading from the N-terminus, the 139-residue chain is D-ribose pyranase (139 aa).

Catalysis depends on His20, which acts as the Proton donor. Substrate is bound by residues Asp28, His106, and 128–130; that span reads YAN.

It belongs to the RbsD / FucU family. RbsD subfamily. As to quaternary structure, homodecamer.

The protein resides in the cytoplasm. It carries out the reaction beta-D-ribopyranose = beta-D-ribofuranose. Its pathway is carbohydrate metabolism; D-ribose degradation; D-ribose 5-phosphate from beta-D-ribopyranose: step 1/2. Its function is as follows. Catalyzes the interconversion of beta-pyran and beta-furan forms of D-ribose. This is D-ribose pyranase from Proteus mirabilis (strain HI4320).